Reading from the N-terminus, the 200-residue chain is Arylesterase (200 aa).

An N-terminal signal peptide occupies residues 1–19 (MIRLLSLVLFFCLSAASQA). Catalysis depends on Ser29, which acts as the Nucleophile. Residues Asp176 and His179 contribute to the active site.

It belongs to the 'GDSL' lipolytic enzyme family. In terms of assembly, homodimer.

It catalyses the reaction a phenyl acetate + H2O = a phenol + acetate + H(+). Functionally, favors the hydrolysis of several arylesters. The protein is Arylesterase of Vibrio mimicus.